We begin with the raw amino-acid sequence, 660 residues long: Bifunctional polymyxin resistance protein ArnA (660 aa).

The tract at residues 1–304 (MKTVVFAYHD…TLGLVQGSRL (304 aa)) is formyltransferase ArnAFT. Position 86-88 (86-88 (HLI)) interacts with (6R)-10-formyltetrahydrofolate. The Proton donor; for formyltransferase activity role is filled by histidine 104. (6R)-10-formyltetrahydrofolate is bound by residues arginine 114 and 136 to 140 (VKRAD). Positions 314–660 (RRTRVLILGV…RTVDLTDKPS (347 aa)) are dehydrogenase ArnADH. NAD(+)-binding positions include aspartate 347 and 368 to 369 (DI). Residues alanine 393, tyrosine 398, and 432–433 (TS) contribute to the UDP-alpha-D-glucuronate site. Glutamate 434 acts as the Proton acceptor; for decarboxylase activity in catalysis. UDP-alpha-D-glucuronate contacts are provided by residues arginine 460, asparagine 492, 526–535 (KLIDGGKQKR), and tyrosine 613. Residue arginine 619 is the Proton donor; for decarboxylase activity of the active site.

In the N-terminal section; belongs to the Fmt family. UDP-L-Ara4N formyltransferase subfamily. The protein in the C-terminal section; belongs to the NAD(P)-dependent epimerase/dehydratase family. UDP-glucuronic acid decarboxylase subfamily. In terms of assembly, homohexamer, formed by a dimer of trimers.

It catalyses the reaction UDP-alpha-D-glucuronate + NAD(+) = UDP-beta-L-threo-pentopyranos-4-ulose + CO2 + NADH. It carries out the reaction UDP-4-amino-4-deoxy-beta-L-arabinose + (6R)-10-formyltetrahydrofolate = UDP-4-deoxy-4-formamido-beta-L-arabinose + (6S)-5,6,7,8-tetrahydrofolate + H(+). Its pathway is nucleotide-sugar biosynthesis; UDP-4-deoxy-4-formamido-beta-L-arabinose biosynthesis; UDP-4-deoxy-4-formamido-beta-L-arabinose from UDP-alpha-D-glucuronate: step 1/3. It functions in the pathway nucleotide-sugar biosynthesis; UDP-4-deoxy-4-formamido-beta-L-arabinose biosynthesis; UDP-4-deoxy-4-formamido-beta-L-arabinose from UDP-alpha-D-glucuronate: step 3/3. It participates in bacterial outer membrane biogenesis; lipopolysaccharide biosynthesis. In terms of biological role, bifunctional enzyme that catalyzes the oxidative decarboxylation of UDP-glucuronic acid (UDP-GlcUA) to UDP-4-keto-arabinose (UDP-Ara4O) and the addition of a formyl group to UDP-4-amino-4-deoxy-L-arabinose (UDP-L-Ara4N) to form UDP-L-4-formamido-arabinose (UDP-L-Ara4FN). The modified arabinose is attached to lipid A and is required for resistance to polymyxin and cationic antimicrobial peptides. This Escherichia coli (strain SMS-3-5 / SECEC) protein is Bifunctional polymyxin resistance protein ArnA.